A 56-amino-acid chain; its full sequence is Ovomucoid (56 aa).

Positions 6–56 (VDCSEYPKPACMSEYRPLCGSDNKTYVNKCNFCNAVVESNGTLTLSHFGKC) constitute a Kazal-like domain. Disulfide bonds link Cys8-Cys38, Cys16-Cys35, and Cys24-Cys56. An N-linked (GlcNAc...) asparagine glycan is attached at Asn45.

It is found in the secreted. This is Ovomucoid from Colinus virginianus (Northern bobwhite).